Consider the following 244-residue polypeptide: Phosphoribosyl isomerase A (244 aa).

The active-site Proton acceptor is the Asp-10. Residue Asp-129 is the Proton donor of the active site.

This sequence belongs to the HisA/HisF family.

Its subcellular location is the cytoplasm. The catalysed reaction is 1-(5-phospho-beta-D-ribosyl)-5-[(5-phospho-beta-D-ribosylamino)methylideneamino]imidazole-4-carboxamide = 5-[(5-phospho-1-deoxy-D-ribulos-1-ylimino)methylamino]-1-(5-phospho-beta-D-ribosyl)imidazole-4-carboxamide. It carries out the reaction N-(5-phospho-beta-D-ribosyl)anthranilate = 1-(2-carboxyphenylamino)-1-deoxy-D-ribulose 5-phosphate. It functions in the pathway amino-acid biosynthesis; L-histidine biosynthesis; L-histidine from 5-phospho-alpha-D-ribose 1-diphosphate: step 4/9. It participates in amino-acid biosynthesis; L-tryptophan biosynthesis; L-tryptophan from chorismate: step 3/5. Functionally, involved in both the histidine and tryptophan biosynthetic pathways. This is Phosphoribosyl isomerase A from Mycobacterium ulcerans (strain Agy99).